Here is a 29-residue protein sequence, read N- to C-terminus: MNLVDIAILILKLIVAALQLLDAVLKYLK.

The chain crosses the membrane as a helical span at residues 6–28 (IAILILKLIVAALQLLDAVLKYL).

The protein resides in the cell inner membrane. Toxic component of a type I toxin-antitoxin (TA) system. Overexpression causes cessation of growth, induces stress-response, a number of membrane protein genes, and leads to cell death. Inhibits ATP synthesis, ATP levels drop drastically quickly after induction. Part of the programmed response to DNA damage; damage leads to increased accumulation of the protein which slows or stops bacterial growth, probably allowing DNA repair before cells continue to grow. The protein is Small toxic protein TisB (tisB) of Escherichia coli (strain K12).